We begin with the raw amino-acid sequence, 1154 residues long: Kinesin-like protein KIN-7E, chloroplastic (1154 aa).

Composition is skewed to low complexity over residues 1-14 and 29-109; these read MSSSSRPGRASISP and VAAA…PPVA. The transit peptide at 1–21 directs the protein to the chloroplast; that stretch reads MSSSSRPGRASISPFRSRRTS. Positions 1-109 are disordered; that stretch reads MSSSSRPGRA…RAAGRAPPVA (109 aa). Residues 119-437 enclose the Kinesin motor domain; it reads NIMVTVRFRP…LKFAHRSKHI (319 aa). 199-206 lines the ATP pocket; the sequence is GVTSSGKT. Residues 441 to 523 are a coiled coil; that stretch reads ASQNKIIDEK…AALMGRIQRL (83 aa). The interval 620-674 is disordered; that stretch reads LSTSVDSESTASGSPSFSRSSQQKHPLLDLKDGRRKSMTRKGDDPALTDSFPGRT. The segment covering 628 to 640 has biased composition (low complexity); it reads STASGSPSFSRSS. Coiled-coil stretches lie at residues 734-761 and 801-845; these read DSQIQEQIEKLKNEIDEKKSHIRVLEQR and ADNR…DNVA. The segment at 838 to 885 is disordered; it reads AKNEDNVASMQSSEPSSTSSNPRDLANEVASHSKMPSRTTEDHTESPL. Residues 846–857 are compositionally biased toward low complexity; it reads SMQSSEPSSTSS. The stretch at 894–967 forms a coiled coil; that stretch reads AEIENLKLDK…DLAAAKDQTR (74 aa).

It belongs to the TRAFAC class myosin-kinesin ATPase superfamily. Kinesin family. KIN-7 subfamily.

The protein localises to the plastid. The protein resides in the chloroplast. The polypeptide is Kinesin-like protein KIN-7E, chloroplastic (Oryza sativa subsp. japonica (Rice)).